A 323-amino-acid polypeptide reads, in one-letter code: Glutathione synthetase (323 aa).

The ATP-grasp domain maps to 133-317; the sequence is KMYALQFQSV…IGDQTIAALE (185 aa). 159 to 215 is an ATP binding site; sequence LDELRAAVLKPLGGKAGEGILFLDPGDRNFNSLVEISTQQGQLPVMVQQYLPEAKDG. Residues Glu-288 and Asn-290 each coordinate Mg(2+).

The protein belongs to the prokaryotic GSH synthase family. It depends on Mg(2+) as a cofactor. Mn(2+) serves as cofactor.

The enzyme catalyses gamma-L-glutamyl-L-cysteine + glycine + ATP = glutathione + ADP + phosphate + H(+). It functions in the pathway sulfur metabolism; glutathione biosynthesis; glutathione from L-cysteine and L-glutamate: step 2/2. This Synechococcus elongatus (strain ATCC 33912 / PCC 7942 / FACHB-805) (Anacystis nidulans R2) protein is Glutathione synthetase.